The following is a 1855-amino-acid chain: Chitin synthase 5 (1855 aa).

The Myosin motor domain occupies 1–778 (MSSAPTTQQN…CWRQIVRAGD (778 aa)). 95 to 102 (GESGTGKT) serves as a coordination point for ATP. Residues N221, N520, and N558 are each glycosylated (N-linked (GlcNAc...) asparagine). A disordered region spans residues 585–650 (AVQQASVASK…PKSADTQQGA (66 aa)). Residues 658–682 (LDNINKSLTAPNTNPYFFFCLKPND) are actin-binding. N-linked (GlcNAc...) asparagine glycosylation occurs at N662. Transmembrane regions (helical) follow at residues 887–907 (WLVL…RIIG) and 922–942 (VAIN…MVGF). One can recognise a Cytochrome b5 heme-binding domain in the interval 950 to 1008 (QHVFSPSELTSYDGKNSDAYVAIRGNVFDLGAFIPQHYPSIVPASALEKYAGTDATNLF). N1037 and N1061 each carry an N-linked (GlcNAc...) asparagine glycan. The chain crosses the membrane as a helical span at residues 1199–1219 (ILLAVSIMLVSVICFKFLAAL). N-linked (GlcNAc...) asparagine glycosylation is found at N1422, N1456, and N1562. 3 helical membrane-spanning segments follow: residues 1587–1607 (FVVF…GYIV), 1621–1641 (ATTA…IFIV), and 1650–1670 (WMII…LIAF). 2 N-linked (GlcNAc...) asparagine glycosylation sites follow: N1755 and N1767. The 56-residue stretch at 1797–1852 (MPNDDAILAEIREILATADLMTVTKKSIKAELERRFGVPMDSRRQYIGSATEAILS) folds into the DEK-C domain.

In the N-terminal section; belongs to the TRAFAC class myosin-kinesin ATPase superfamily. Myosin family. This sequence in the C-terminal section; belongs to the chitin synthase family. Class V subfamily.

The protein localises to the apical cell membrane. Its subcellular location is the cell septum. It is found in the cell tip. It carries out the reaction [(1-&gt;4)-N-acetyl-beta-D-glucosaminyl](n) + UDP-N-acetyl-alpha-D-glucosamine = [(1-&gt;4)-N-acetyl-beta-D-glucosaminyl](n+1) + UDP + H(+). Its function is as follows. Polymerizes chitin, a structural polymer of the cell wall and septum, by transferring the sugar moiety of UDP-GlcNAc to the non-reducing end of the growing chitin polymer. The chain is Chitin synthase 5 from Zymoseptoria tritici (strain CBS 115943 / IPO323) (Speckled leaf blotch fungus).